Here is a 1084-residue protein sequence, read N- to C-terminus: Teashirt homolog 1 (1084 aa).

3 disordered regions span residues Glu-49–Tyr-108, Asn-140–Thr-167, and Gly-269–Glu-298. Polar residues-rich tracts occupy residues Gln-57–Asp-71 and Asn-140–Glu-152. 2 C2H2-type zinc fingers span residues Phe-246–His-270 and Leu-307–His-331. Residues Gly-269–Lys-284 show a composition bias toward basic and acidic residues. The C2H2-type 3; atypical zinc-finger motif lies at Leu-416 to His-440. Disordered stretches follow at residues Ser-467 to Glu-534 and Thr-653 to Lys-728. Composition is skewed to basic and acidic residues over residues Ser-496 to Glu-534, Thr-653 to Ser-671, and Lys-681 to Leu-714. The residue at position 771 (Ser-771) is a Phosphoserine. The interval Gly-855–Glu-879 is disordered. The span at Pro-859–Ser-868 shows a compositional bias: polar residues. A DNA-binding region (homeobox; atypical) is located at residues Arg-891–Gly-961. C2H2-type zinc fingers lie at residues Phe-976–His-998 and Phe-1044–His-1067.

The protein belongs to the teashirt C2H2-type zinc-finger protein family. As to quaternary structure, interacts (via homeobox domain) with APBB1 (via PID domain 1).

Its subcellular location is the nucleus. Its function is as follows. Probable transcriptional regulator involved in developmental processes. May act as a transcriptional repressor (Potential). This chain is Teashirt homolog 1 (Tshz1), found in Mus musculus (Mouse).